Reading from the N-terminus, the 962-residue chain is Leucine--tRNA ligase (962 aa).

Residues 40 to 51 (PYPSGAGLHVGH) carry the 'HIGH' region motif. The short motif at 737 to 741 (KMSKS) is the 'KMSKS' region element. Lys740 contacts ATP.

This sequence belongs to the class-I aminoacyl-tRNA synthetase family.

It is found in the cytoplasm. It catalyses the reaction tRNA(Leu) + L-leucine + ATP = L-leucyl-tRNA(Leu) + AMP + diphosphate. The protein is Leucine--tRNA ligase of Flavobacterium psychrophilum (strain ATCC 49511 / DSM 21280 / CIP 103535 / JIP02/86).